Here is a 539-residue protein sequence, read N- to C-terminus: Phosphatidylinositol 4-phosphate 5-kinase type-1 beta (539 aa).

Residues 1-21 form a disordered region; the sequence is MSSTAENGDAVPGKQNEEKTY. Residues 25 to 395 enclose the PIPK domain; sequence ASSAIKGAIQ…RFLKFMNSRV (371 aa). 3 positions are modified to phosphoserine: serine 445, serine 447, and serine 448.

In terms of assembly, interacts with RAC1, AJUBA, PLD1, PLD2 and ARF1. In terms of tissue distribution, highly expressed in brain and testis. Barely detectable in liver and skeletal muscle.

The protein resides in the cytoplasm. The protein localises to the cytosol. It is found in the cell membrane. It localises to the endomembrane system. It catalyses the reaction a 1,2-diacyl-sn-glycero-3-phospho-(1D-myo-inositol 4-phosphate) + ATP = a 1,2-diacyl-sn-glycero-3-phospho-(1D-myo-inositol-4,5-bisphosphate) + ADP + H(+). It carries out the reaction 1-octadecanoyl-2-(5Z,8Z,11Z,14Z)-eicosatetraenoyl-sn-glycero-3-phospho-1D-myo-inositol 4-phosphate + ATP = 1-octadecanoyl-2-(5Z,8Z,11Z,14Z)-eicosatetraenoyl-sn-glycero-3-phospho-1D-myo-inositol 4,5-bisphosphate + ADP + H(+). The enzyme catalyses 1-octadecanoyl-2-(9Z)-octadecenoyl-sn-glycero-3-phospho-1D-myo-inositol 4-phosphate + ATP = 1-octadecanoyl-2-(9Z)-octadecenoyl-sn-glycero-3-phospho-1D-myo-inositol 4,5-bisphosphate + ADP + H(+). The catalysed reaction is 1-octadecanoyl-2-(9Z)-octadecenoyl-sn-glycero-3-phospho-1D-myo-inositol + ATP = 1-octadecanoyl-2-(9Z)-octadecenoyl-sn-glycero-3-phospho-1D-myo-inositol 5-phosphate + ADP + H(+). It catalyses the reaction 1-octadecanoyl-2-(9Z,12Z)-octadecadienoyl-sn-glycero-3-phospho-1D-myo-inositol + ATP = 1-octadecanoyl-2-(9Z,12Z)-octadecadienoyl-sn-glycero-3-phospho-1D-myo-inositol 5-phosphate + ADP + H(+). It carries out the reaction 1-octadecanoyl-2-(5Z,8Z,11Z,14Z-eicosatetraenoyl)-sn-glycero-3-phospho-(1D-myo-inositol) + ATP = 1-octadecanoyl-2-(5Z,8Z,11Z,14Z)-eicosatetraenoyl-sn-glycero-3-phospho-1D-myo-inositol 5-phosphate + ADP + H(+). The enzyme catalyses 1,2-di-(9Z,12Z)-octadecadienoyl-sn-glycero-3-phospho-1D-myo-inositol + ATP = 1,2-di(9Z,12Z)-octadecadienoyl-sn-glycero-3-phospho-1D-myo-inositol 5-phosphate + ADP + H(+). Its activity is regulated as follows. Activated by phosphatidic acid. In terms of biological role, catalyzes the phosphorylation of phosphatidylinositol 4-phosphate (PtdIns(4)P/PI4P) to form phosphatidylinositol 4,5-bisphosphate (PtdIns(4,5)P2/PIP2), a lipid second messenger that regulates several cellular processes such as signal transduction, vesicle trafficking, actin cytoskeleton dynamics, cell adhesion, and cell motility. PtdIns(4,5)P2 can directly act as a second messenger or can be utilized as a precursor to generate other second messengers: inositol 1,4,5-trisphosphate (IP3), diacylglycerol (DAG) or phosphatidylinositol-3,4,5-trisphosphate (PtdIns(3,4,5)P3/PIP3). Mediates RAC1-dependent reorganization of actin filaments. Contributes to the activation of phospholipase PLD2. Together with PIP5K1A, is required, after stimulation by G-protein coupled receptors, for the synthesis of IP3 that will induce stable platelet adhesion. This chain is Phosphatidylinositol 4-phosphate 5-kinase type-1 beta, found in Mus musculus (Mouse).